Reading from the N-terminus, the 502-residue chain is Lysine--tRNA ligase (502 aa).

Residues Glu410 and Glu417 each contribute to the Mg(2+) site.

The protein belongs to the class-II aminoacyl-tRNA synthetase family. In terms of assembly, homodimer. It depends on Mg(2+) as a cofactor.

Its subcellular location is the cytoplasm. It carries out the reaction tRNA(Lys) + L-lysine + ATP = L-lysyl-tRNA(Lys) + AMP + diphosphate. In Photobacterium profundum (strain SS9), this protein is Lysine--tRNA ligase.